A 144-amino-acid chain; its full sequence is MAKFLKYGRVVILLQGRFAGKKAVIVKSSEDGTKDRKFGHVLVAGVERSPKKVTKRMGSKKIQKRTSVKPFIKYVNLNHIMPTRYSVKELCDFKELVKEDKIKNNAKSEVRDTLKKVFVEKYRTINPEEKSASHTKFFFSKLRF.

It belongs to the eukaryotic ribosomal protein eL27 family.

The protein localises to the cytoplasm. This Tetrahymena thermophila protein is Large ribosomal subunit protein eL27 (RPL27).